A 278-amino-acid polypeptide reads, in one-letter code: Dermonecrotic toxin LlSicTox-alphaIII3ii (278 aa).

His-5 is an active-site residue. Mg(2+)-binding residues include Glu-25 and Asp-27. The Nucleophile role is filled by His-40. Cys-44 and Cys-50 are disulfide-bonded. Asp-84 is a binding site for Mg(2+).

This sequence belongs to the arthropod phospholipase D family. Class I subfamily. Requires Mg(2+) as cofactor. As to expression, expressed by the venom gland.

The protein resides in the secreted. The catalysed reaction is an N-(acyl)-sphingosylphosphocholine = an N-(acyl)-sphingosyl-1,3-cyclic phosphate + choline. The enzyme catalyses an N-(acyl)-sphingosylphosphoethanolamine = an N-(acyl)-sphingosyl-1,3-cyclic phosphate + ethanolamine. It carries out the reaction a 1-acyl-sn-glycero-3-phosphocholine = a 1-acyl-sn-glycero-2,3-cyclic phosphate + choline. It catalyses the reaction a 1-acyl-sn-glycero-3-phosphoethanolamine = a 1-acyl-sn-glycero-2,3-cyclic phosphate + ethanolamine. In terms of biological role, dermonecrotic toxins cleave the phosphodiester linkage between the phosphate and headgroup of certain phospholipids (sphingolipid and lysolipid substrates), forming an alcohol (often choline) and a cyclic phosphate. This toxin acts on sphingomyelin (SM). It may also act on ceramide phosphoethanolamine (CPE), lysophosphatidylcholine (LPC) and lysophosphatidylethanolamine (LPE), but not on lysophosphatidylserine (LPS), and lysophosphatidylglycerol (LPG). It acts by transphosphatidylation, releasing exclusively cyclic phosphate products as second products. Induces dermonecrosis, hemolysis, increased vascular permeability, edema, inflammatory response, and platelet aggregation. The sequence is that of Dermonecrotic toxin LlSicTox-alphaIII3ii from Loxosceles laeta (South American recluse spider).